A 127-amino-acid chain; its full sequence is Large-conductance mechanosensitive channel (127 aa).

A run of 3 helical transmembrane segments spans residues 19–39 (VGVI…TNII), 42–62 (LLGI…VGSA), and 67–87 (GAFI…FLLI).

This sequence belongs to the MscL family. As to quaternary structure, homopentamer.

Its subcellular location is the cell membrane. Its function is as follows. Channel that opens in response to stretch forces in the membrane lipid bilayer. May participate in the regulation of osmotic pressure changes within the cell. This is Large-conductance mechanosensitive channel from Levilactobacillus brevis (strain ATCC 367 / BCRC 12310 / CIP 105137 / JCM 1170 / LMG 11437 / NCIMB 947 / NCTC 947) (Lactobacillus brevis).